We begin with the raw amino-acid sequence, 282 residues long: Pantothenate synthetase (282 aa).

30 to 37 (MGYLHEGH) contacts ATP. Catalysis depends on His-37, which acts as the Proton donor. Gln-61 provides a ligand contact to (R)-pantoate. Beta-alanine is bound at residue Gln-61. 147 to 150 (GMKD) contacts ATP. Gln-153 contacts (R)-pantoate. ATP is bound by residues Val-176 and 184-187 (KSSR).

Belongs to the pantothenate synthetase family. As to quaternary structure, homodimer.

The protein localises to the cytoplasm. The catalysed reaction is (R)-pantoate + beta-alanine + ATP = (R)-pantothenate + AMP + diphosphate + H(+). Its pathway is cofactor biosynthesis; (R)-pantothenate biosynthesis; (R)-pantothenate from (R)-pantoate and beta-alanine: step 1/1. Its function is as follows. Catalyzes the condensation of pantoate with beta-alanine in an ATP-dependent reaction via a pantoyl-adenylate intermediate. The chain is Pantothenate synthetase from Bacillus cereus (strain G9842).